The sequence spans 332 residues: Anthranilate phosphoribosyltransferase (332 aa).

5-phospho-alpha-D-ribose 1-diphosphate contacts are provided by residues Gly79, 82 to 83 (GD), Thr87, 89 to 92 (NIST), 107 to 115 (KHGNRGVSS), and Ser119. Gly79 serves as a coordination point for anthranilate. Position 91 (Ser91) interacts with Mg(2+). Position 110 (Asn110) interacts with anthranilate. Position 165 (Arg165) interacts with anthranilate. Positions 223 and 224 each coordinate Mg(2+).

It belongs to the anthranilate phosphoribosyltransferase family. Homodimer. Mg(2+) is required as a cofactor.

It carries out the reaction N-(5-phospho-beta-D-ribosyl)anthranilate + diphosphate = 5-phospho-alpha-D-ribose 1-diphosphate + anthranilate. Its pathway is amino-acid biosynthesis; L-tryptophan biosynthesis; L-tryptophan from chorismate: step 2/5. Its function is as follows. Catalyzes the transfer of the phosphoribosyl group of 5-phosphorylribose-1-pyrophosphate (PRPP) to anthranilate to yield N-(5'-phosphoribosyl)-anthranilate (PRA). This Vibrio cholerae serotype O1 (strain ATCC 39541 / Classical Ogawa 395 / O395) protein is Anthranilate phosphoribosyltransferase.